Consider the following 239-residue polypeptide: Sugar fermentation stimulation protein homolog (239 aa).

The protein belongs to the SfsA family.

The chain is Sugar fermentation stimulation protein homolog from Shewanella woodyi (strain ATCC 51908 / MS32).